A 275-amino-acid polypeptide reads, in one-letter code: N-(5'-phosphoribosyl)anthranilate isomerase 2, chloroplastic (275 aa).

A chloroplast-targeting transit peptide spans 1 to 32; that stretch reads MSTGISTDLHVHFGALNFSKTYKSGLSNRTVS.

It belongs to the TrpF family. Expressed in roots and shoots.

The protein localises to the plastid. It localises to the chloroplast. The enzyme catalyses N-(5-phospho-beta-D-ribosyl)anthranilate = 1-(2-carboxyphenylamino)-1-deoxy-D-ribulose 5-phosphate. Its pathway is amino-acid biosynthesis; L-tryptophan biosynthesis; L-tryptophan from chorismate: step 3/5. The chain is N-(5'-phosphoribosyl)anthranilate isomerase 2, chloroplastic (PAI2) from Arabidopsis thaliana (Mouse-ear cress).